The following is a 417-amino-acid chain: NADH-quinone oxidoreductase subunit D (417 aa).

It belongs to the complex I 49 kDa subunit family. As to quaternary structure, NDH-1 is composed of 14 different subunits. Subunits NuoB, C, D, E, F, and G constitute the peripheral sector of the complex.

It localises to the cell inner membrane. It catalyses the reaction a quinone + NADH + 5 H(+)(in) = a quinol + NAD(+) + 4 H(+)(out). Its function is as follows. NDH-1 shuttles electrons from NADH, via FMN and iron-sulfur (Fe-S) centers, to quinones in the respiratory chain. The immediate electron acceptor for the enzyme in this species is believed to be ubiquinone. Couples the redox reaction to proton translocation (for every two electrons transferred, four hydrogen ions are translocated across the cytoplasmic membrane), and thus conserves the redox energy in a proton gradient. This is NADH-quinone oxidoreductase subunit D from Polaromonas sp. (strain JS666 / ATCC BAA-500).